A 147-amino-acid chain; its full sequence is Nucleoside diphosphate kinase (147 aa).

Residues lysine 9, phenylalanine 57, arginine 85, threonine 91, arginine 102, and asparagine 112 each coordinate ATP. The active-site Pros-phosphohistidine intermediate is the histidine 115.

Belongs to the NDK family. It depends on Mg(2+) as a cofactor.

The protein resides in the cytoplasm. The catalysed reaction is a 2'-deoxyribonucleoside 5'-diphosphate + ATP = a 2'-deoxyribonucleoside 5'-triphosphate + ADP. It carries out the reaction a ribonucleoside 5'-diphosphate + ATP = a ribonucleoside 5'-triphosphate + ADP. In terms of biological role, major role in the synthesis of nucleoside triphosphates other than ATP. The ATP gamma phosphate is transferred to the NDP beta phosphate via a ping-pong mechanism, using a phosphorylated active-site intermediate. The chain is Nucleoside diphosphate kinase from Ignicoccus hospitalis (strain KIN4/I / DSM 18386 / JCM 14125).